The sequence spans 798 residues: RNA cytosine-C(5)-methyltransferase NSUN2 (798 aa).

The segment covering 1 to 13 (MGRRNRRNRQRHQ) has biased composition (basic residues). A disordered region spans residues 1-30 (MGRRNRRNRQRHQRSTEQRSPAEEEQRRKA). Residues 14–30 (RSTEQRSPAEEEQRRKA) show a composition bias toward basic and acidic residues. S-adenosyl-L-methionine contacts are provided by residues 186–192 (CAAPGSK), D217, D244, and D270. C323 serves as the catalytic Nucleophile. 2 disordered regions span residues 476-499 (DEPA…SSKT) and 723-798 (KACD…ESVD). A compositionally biased stretch (basic and acidic residues) spans 723 to 747 (KACDEEHIDEKMDIDGAKEESKELS). Over residues 751–762 (SGDDEDPKEEDV) the composition is skewed to acidic residues. The span at 763-772 (IDRGVLEHVA) shows a compositional bias: basic and acidic residues.

It belongs to the class I-like SAM-binding methyltransferase superfamily. RsmB/NOP family. TRM4 subfamily.

Its subcellular location is the nucleus. It localises to the nucleolus. The protein localises to the cytoplasm. It is found in the mitochondrion. The protein resides in the cytoskeleton. Its subcellular location is the spindle. It localises to the secreted. The protein localises to the extracellular exosome. The catalysed reaction is cytidine(48) in tRNA + S-adenosyl-L-methionine = 5-methylcytidine(48) in tRNA + S-adenosyl-L-homocysteine + H(+). The enzyme catalyses cytidine(49) in tRNA + S-adenosyl-L-methionine = 5-methylcytidine(49) in tRNA + S-adenosyl-L-homocysteine + H(+). It catalyses the reaction cytidine(50) in tRNA + S-adenosyl-L-methionine = 5-methylcytidine(50) in tRNA + S-adenosyl-L-homocysteine + H(+). It carries out the reaction cytidine(34) in tRNA precursor + S-adenosyl-L-methionine = 5-methylcytidine(34) in tRNA precursor + S-adenosyl-L-homocysteine + H(+). The catalysed reaction is a cytidine in mRNA + S-adenosyl-L-methionine = a 5-methylcytidine in mRNA + S-adenosyl-L-homocysteine + H(+). In terms of biological role, RNA cytosine C(5)-methyltransferase that methylates cytosine to 5-methylcytosine (m5C) in various RNAs, such as tRNAs, mRNAs and some long non-coding RNAs (lncRNAs). Involved in various processes, such as epidermal stem cell differentiation, testis differentiation and maternal to zygotic transition during early development: acts by increasing protein synthesis; cytosine C(5)-methylation promoting tRNA stability and preventing mRNA decay. Methylates cytosine to 5-methylcytosine (m5C) at positions 34 and 48 of intron-containing tRNA(Leu)(CAA) precursors, and at positions 48, 49 and 50 of tRNA(Gly)(GCC) precursors. tRNA methylation is required generation of RNA fragments derived from tRNAs (tRFs). Also mediates C(5)-methylation of mitochondrial tRNAs. Catalyzes cytosine C(5)-methylation of mRNAs, leading to stabilize them and prevent mRNA decay. Cytosine C(5)-methylation of mRNAs also regulates mRNA export. Also mediates cytosine C(5)-methylation of non-coding RNAs, such as vault RNAs (vtRNAs), promoting their processing into regulatory small RNAs. Required for proper spindle assembly and chromosome segregation, independently of its methyltransferase activity. This chain is RNA cytosine-C(5)-methyltransferase NSUN2, found in Xenopus tropicalis (Western clawed frog).